The primary structure comprises 365 residues: AP2/ERF and B3 domain-containing protein Os01g0141000 (365 aa).

A disordered region spans residues 1–24 (MGVVSFSSTSSGASTATTESGGAV). Positions 68 to 123 (RYKGVVPQPNGRWGAQIYERHARVWLGTFPDEEAAARAYDVAALRYRGRDAATNFP) form a DNA-binding region, AP2/ERF. Positions 182–294 (FEKAVTPSDV…KLLFIDCKKN (113 aa)) form a DNA-binding region, TF-B3.

It localises to the nucleus. This is AP2/ERF and B3 domain-containing protein Os01g0141000 from Oryza sativa subsp. japonica (Rice).